We begin with the raw amino-acid sequence, 173 residues long: RNA pyrophosphohydrolase (173 aa).

A Nudix hydrolase domain is found at 6-149 (GFRANVGIII…KRDVYRKVMK (144 aa)). The short motif at 38 to 59 (GGVDDGESAEEAMYRELYEEVG) is the Nudix box element.

This sequence belongs to the Nudix hydrolase family. RppH subfamily. A divalent metal cation serves as cofactor.

Accelerates the degradation of transcripts by removing pyrophosphate from the 5'-end of triphosphorylated RNA, leading to a more labile monophosphorylated state that can stimulate subsequent ribonuclease cleavage. The protein is RNA pyrophosphohydrolase of Shewanella pealeana (strain ATCC 700345 / ANG-SQ1).